The primary structure comprises 421 residues: Phosphatidylinositol 5-phosphate 4-kinase type-2 gamma (421 aa).

N-acetylalanine is present on A2. S26 carries the phosphoserine modification. One can recognise a PIPK domain in the interval 43–420 (AADPLVGVFL…RFLDFIANIF (378 aa)). A required for interaction with PIP5K1A region spans residues 69–75 (VMLLPDD). The residue at position 349 (S349) is a Phosphoserine.

As to quaternary structure, interacts with PIP5K1A; the interaction inhibits PIP5K1A kinase activity. Post-translationally, phosphorylated, phosphorylation is induced by EGF.

It localises to the endoplasmic reticulum. The protein resides in the cytoplasm. The enzyme catalyses a 1,2-diacyl-sn-glycero-3-phospho-(1D-myo-inositol-5-phosphate) + ATP = a 1,2-diacyl-sn-glycero-3-phospho-(1D-myo-inositol-4,5-bisphosphate) + ADP + H(+). The catalysed reaction is 1,2-dihexadecanoyl-sn-glycero-3-phospho-(1D-myo-inositol-5-phosphate) + ATP = 1,2-dihexadecanoyl-sn-glycero-3-phospho-(1D-myo-inositol-4,5-bisphosphate) + ADP + H(+). It carries out the reaction 1,2-dihexadecanoyl-sn-glycero-3-phospho-(1D-myo-inositol-5-phosphate) + GTP = 1,2-dihexadecanoyl-sn-glycero-3-phospho-(1D-myo-inositol-4,5-bisphosphate) + GDP + H(+). Functionally, phosphatidylinositol 5-phosphate 4-kinase with low enzymatic activity. May be a GTP sensor, has higher GTP-dependent kinase activity than ATP-dependent kinase activity. PIP4Ks negatively regulate insulin signaling through a catalytic-independent mechanism. They interact with PIP5Ks and suppress PIP5K-mediated PtdIns(4,5)P2 synthesis and insulin-dependent conversion to PtdIns(3,4,5)P3. The chain is Phosphatidylinositol 5-phosphate 4-kinase type-2 gamma from Mus musculus (Mouse).